Here is a 750-residue protein sequence, read N- to C-terminus: Photosystem I P700 chlorophyll a apoprotein A1 (750 aa).

A run of 8 helical transmembrane segments spans residues 70–93 (VFSAHFGQLSIIFLWLSGMYFHGA), 156–179 (LYCTAIGALVFAALMLFAGWFHYH), 195–219 (LNHHLAGLLGLGSLSWAGHQVHVSL), 291–309 (IAHHHLAIAILFLIAGHMY), 346–369 (WHAQLALNLAMLGSLTIVVAHHMY), 385–411 (LSLFTHHMWIGGFLIVGAAAHAAIFMV), 433–455 (AIISHLNWVCIFLGFHSFGLYIH), and 531–549 (FLVHHIHAFTIHVTVLILL). Cys573 and Cys582 together coordinate [4Fe-4S] cluster. 2 helical membrane passes run 589–610 (HVFLGLFWMYNAISVVIFHFSW) and 664–686 (LSAYGLFFLGAHFVWAFSLMFLF). Residue His675 participates in chlorophyll a' binding. 2 residues coordinate chlorophyll a: Met683 and Tyr691. Trp692 is a binding site for phylloquinone. Residues 724–744 (AVGVTHYLLGGIATTWAFFLA) traverse the membrane as a helical segment.

Belongs to the PsaA/PsaB family. In terms of assembly, the PsaA/B heterodimer binds the P700 chlorophyll special pair and subsequent electron acceptors. PSI consists of a core antenna complex that captures photons, and an electron transfer chain that converts photonic excitation into a charge separation. The eukaryotic PSI reaction center is composed of at least 11 subunits. P700 is a chlorophyll a/chlorophyll a' dimer, A0 is one or more chlorophyll a, A1 is one or both phylloquinones and FX is a shared 4Fe-4S iron-sulfur center. is required as a cofactor.

It is found in the plastid. The protein localises to the chloroplast thylakoid membrane. It carries out the reaction reduced [plastocyanin] + hnu + oxidized [2Fe-2S]-[ferredoxin] = oxidized [plastocyanin] + reduced [2Fe-2S]-[ferredoxin]. PsaA and PsaB bind P700, the primary electron donor of photosystem I (PSI), as well as the electron acceptors A0, A1 and FX. PSI is a plastocyanin-ferredoxin oxidoreductase, converting photonic excitation into a charge separation, which transfers an electron from the donor P700 chlorophyll pair to the spectroscopically characterized acceptors A0, A1, FX, FA and FB in turn. Oxidized P700 is reduced on the lumenal side of the thylakoid membrane by plastocyanin. The sequence is that of Photosystem I P700 chlorophyll a apoprotein A1 from Nymphaea alba (White water-lily).